The following is a 762-amino-acid chain: 5-methyltetrahydropteroyltriglutamate--homocysteine methyltransferase (762 aa).

5-methyltetrahydropteroyltri-L-glutamate is bound by residues 18-21 and Lys112; that span reads REWK. L-homocysteine contacts are provided by residues 435–437 and Glu488; that span reads IGS. L-methionine-binding positions include 435–437 and Glu488; that span reads IGS. 5-methyltetrahydropteroyltri-L-glutamate contacts are provided by residues 519–520 and Trp565; that span reads RC. Asp603 serves as a coordination point for L-homocysteine. Asp603 provides a ligand contact to L-methionine. A 5-methyltetrahydropteroyltri-L-glutamate-binding site is contributed by Glu609. The Zn(2+) site is built by His645, Cys647, and Glu669. His698 (proton donor) is an active-site residue. Cys730 is a Zn(2+) binding site.

It belongs to the vitamin-B12 independent methionine synthase family. Zn(2+) serves as cofactor.

The enzyme catalyses 5-methyltetrahydropteroyltri-L-glutamate + L-homocysteine = tetrahydropteroyltri-L-glutamate + L-methionine. It participates in amino-acid biosynthesis; L-methionine biosynthesis via de novo pathway; L-methionine from L-homocysteine (MetE route): step 1/1. Catalyzes the transfer of a methyl group from 5-methyltetrahydrofolate to homocysteine resulting in methionine formation. The sequence is that of 5-methyltetrahydropteroyltriglutamate--homocysteine methyltransferase from Bacillus velezensis (strain DSM 23117 / BGSC 10A6 / LMG 26770 / FZB42) (Bacillus amyloliquefaciens subsp. plantarum).